A 401-amino-acid polypeptide reads, in one-letter code: uncharacterized protein (401 aa).

This is an uncharacterized protein from Mycobacterium tuberculosis (strain CDC 1551 / Oshkosh).